The primary structure comprises 1167 residues: ATP-dependent helicase/nuclease subunit A (1167 aa).

In terms of domain architecture, UvrD-like helicase ATP-binding spans 2–451 (KNWTAEQMRA…IELSLNFRSR (450 aa)). 23–30 (AAAGAGKT) is a binding site for ATP. The region spanning 478 to 768 (KAFLKKGADY…RVMSVHKSKG (291 aa)) is the UvrD-like helicase C-terminal domain.

It belongs to the helicase family. AddA subfamily. In terms of assembly, heterodimer of AddA and AddB/RexB. The cofactor is Mg(2+).

It carries out the reaction Couples ATP hydrolysis with the unwinding of duplex DNA by translocating in the 3'-5' direction.. It catalyses the reaction ATP + H2O = ADP + phosphate + H(+). In terms of biological role, the heterodimer acts as both an ATP-dependent DNA helicase and an ATP-dependent, dual-direction single-stranded exonuclease. Recognizes the chi site generating a DNA molecule suitable for the initiation of homologous recombination. The AddA nuclease domain is required for chi fragment generation; this subunit has the helicase and 3' -&gt; 5' nuclease activities. The chain is ATP-dependent helicase/nuclease subunit A from Carboxydothermus hydrogenoformans (strain ATCC BAA-161 / DSM 6008 / Z-2901).